A 141-amino-acid chain; its full sequence is Hemoglobin subunit alpha-1/2 (141 aa).

Positions Val-1–Arg-141 constitute a Globin domain. Ser-3 bears the Phosphoserine mark. N6-succinyllysine is present on Lys-7. Thr-8 carries the phosphothreonine modification. The residue at position 11 (Lys-11) is an N6-succinyllysine. At Lys-16 the chain carries N6-acetyllysine; alternate. Lys-16 is modified (N6-succinyllysine; alternate). Residue Tyr-24 is modified to Phosphotyrosine. Residue Ser-35 is modified to Phosphoserine. Lys-40 carries the post-translational modification N6-succinyllysine. A Phosphoserine modification is found at Ser-49. His-58 contacts O2. His-87 is a binding site for heme b. Ser-102 bears the Phosphoserine mark. A Phosphothreonine modification is found at Thr-108. 2 positions are modified to phosphoserine: Ser-124 and Ser-131. A phosphothreonine mark is found at Thr-134 and Thr-137. Position 138 is a phosphoserine (Ser-138).

This sequence belongs to the globin family. In terms of assembly, heterotetramer of two alpha chains and two beta chains. In terms of tissue distribution, red blood cells.

In terms of biological role, involved in oxygen transport from the lung to the various peripheral tissues. The polypeptide is Hemoglobin subunit alpha-1/2 (Macaca speciosa (Stump-tail macaque)).